A 166-amino-acid polypeptide reads, in one-letter code: Large ribosomal subunit protein uL10 (166 aa).

Belongs to the universal ribosomal protein uL10 family. As to quaternary structure, part of the ribosomal stalk of the 50S ribosomal subunit. The N-terminus interacts with L11 and the large rRNA to form the base of the stalk. The C-terminus forms an elongated spine to which L12 dimers bind in a sequential fashion forming a multimeric L10(L12)X complex.

Functionally, forms part of the ribosomal stalk, playing a central role in the interaction of the ribosome with GTP-bound translation factors. The chain is Large ribosomal subunit protein uL10 from Aromatoleum aromaticum (strain DSM 19018 / LMG 30748 / EbN1) (Azoarcus sp. (strain EbN1)).